The primary structure comprises 588 residues: MKLPVREFDAVVIGAGGAGMRAALQISQSGQTCALLSKVFPTRSHTVSAQGGITVALGNTHEDNWEWHMYDTVKGSDYIGDQDAIEYMCKTGPEAILELEHMGLPFSRLDDGRIYQRPFGGQSKNFGGEQAARTAAAADRTGHALLHTLYQQNLKNHTTIFSEWYALDLVKNQDGAVVGCTALCIETGEVVYFKARATVLATGGAGRIYQSTTNAHINTGDGVGMAIRAGVPVQDMEMWQFHPTGIAGAGVLVTEGCRGEGGYLLNKHGERFMERYAPNAKDLAGRDVVARSIMIEIREGRGCDGPWGPHAKLKLDHLGKEVLESRLPGILELSRTFAHVDPVKEPIPVIPTCHYMMGGIPTKVTGQALTVNEKGEDVVVPGLFAVGEIACVSVHGANRLGGNSLLDLVVFGRAAGLHLQESIAEQGALRDASESDVEASLDRLNRWNNNRNGEDPVAIRKALQECMQHNFSVFREGDAMAKGLEQLKVIRERLKNARLDDTSSEFNTQRVECLELDNLMETAYATAVSANFRTESRGAHSRFDFPDRDDENWLCHSLYLPESESMTRRSVNMEPKLRPAFPPKIRTY.

Residues 14-19 (GAGGAG), 37-52 (SKVF…AQGG), and D221 each bind FAD. Residue H45 is modified to Tele-8alpha-FAD histidine. Substrate-binding residues include H242 and T254. Position 267 is an N6-acetyllysine (K267). R286 acts as the Proton acceptor in catalysis. H354 contacts substrate. Residue E388 participates in FAD binding. Position 399 (R399) interacts with substrate. 404 to 405 (SL) provides a ligand contact to FAD.

This sequence belongs to the FAD-dependent oxidoreductase 2 family. FRD/SDH subfamily. As to quaternary structure, part of an enzyme complex containing four subunits: a flavoprotein, an iron-sulfur, cytochrome b-556, and a hydrophobic anchor protein. The complex forms trimers. The cofactor is FAD.

The protein localises to the cell inner membrane. The enzyme catalyses a quinone + succinate = fumarate + a quinol. It participates in carbohydrate metabolism; tricarboxylic acid cycle; fumarate from succinate (bacterial route): step 1/1. Two distinct, membrane-bound, FAD-containing enzymes are responsible for the catalysis of fumarate and succinate interconversion; the fumarate reductase is used in anaerobic growth, and the succinate dehydrogenase is used in aerobic growth. This Escherichia coli O157:H7 protein is Succinate dehydrogenase flavoprotein subunit (sdhA).